We begin with the raw amino-acid sequence, 375 residues long: Protein RecA (375 aa).

75–82 (GPESSGKT) contacts ATP. Residues 339–375 (GPYAKMKDEQTEEAAGDQMDEDKPIDLSPNFDDDDAN) form a disordered region. Residues 348–358 (QTEEAAGDQMD) show a composition bias toward acidic residues.

Belongs to the RecA family.

Its subcellular location is the cytoplasm. Functionally, can catalyze the hydrolysis of ATP in the presence of single-stranded DNA, the ATP-dependent uptake of single-stranded DNA by duplex DNA, and the ATP-dependent hybridization of homologous single-stranded DNAs. It interacts with LexA causing its activation and leading to its autocatalytic cleavage. This is Protein RecA from Corynebacterium jeikeium (strain K411).